The following is a 1728-amino-acid chain: Mitochondrial 3' processome subunit 1 (1728 aa).

A mitochondrion-targeting transit peptide spans 1–117; it reads MRRLILSQTL…AGKMTGSSRF (117 aa). Disordered stretches follow at residues 45 to 71, 88 to 156, and 829 to 863; these read HRKR…SGDG, ESPV…IGQQ, and GCNR…PKGT.

Component of the mitochondrial 3' processome (MPsome) complex composed at least of terminal uridylyltransferase KRET1/TUT1, 3'-5' exonuclease DSS1, MPSS1, MPSS2 and MPSS3. Within the complex, interacts with KRET1.

Its subcellular location is the mitochondrion. As part of the mitochondrial 3' processome (MPsome), involved in the maturation of guided RNA (gRNA) precursors. The polypeptide is Mitochondrial 3' processome subunit 1 (Trypanosoma brucei brucei).